Here is a 656-residue protein sequence, read N- to C-terminus: Chromosomal replication initiator protein DnaA (656 aa).

The domain I, interacts with DnaA modulators stretch occupies residues 1–100 (MADVPADLAA…TAGEPAGPAP (100 aa)). A disordered region spans residues 91–313 (TAGEPAGPAP…PAPATGPGEP (223 aa)). Over residues 97–109 (GPAPQAPQSPPSR) the composition is skewed to pro residues. Positions 101 to 315 (QAPQSPPSRP…PATGPGEPTA (215 aa)) are domain II. Composition is skewed to basic and acidic residues over residues 126-144 (GREE…RNRA) and 231-273 (QRGD…RDLP). A compositionally biased stretch (low complexity) spans 291–313 (GPATGAPGPLAAQPAPATGPGEP). Residues 316–532 (RLNPKYLFDT…GALIRVTAFA (217 aa)) are domain III, AAA+ region. ATP-binding residues include G360, G362, K363, and T364. The interval 533–656 (SLNRQPVDLG…TELTNRIKNG (124 aa)) is domain IV, binds dsDNA.

The protein belongs to the DnaA family. As to quaternary structure, oligomerizes as a right-handed, spiral filament on DNA at oriC.

It localises to the cytoplasm. Plays an essential role in the initiation and regulation of chromosomal replication. ATP-DnaA binds to the origin of replication (oriC) to initiate formation of the DNA replication initiation complex once per cell cycle. Binds the DnaA box (a 9 base pair repeat at the origin) and separates the double-stranded (ds)DNA. Forms a right-handed helical filament on oriC DNA; dsDNA binds to the exterior of the filament while single-stranded (ss)DNA is stabiized in the filament's interior. The ATP-DnaA-oriC complex binds and stabilizes one strand of the AT-rich DNA unwinding element (DUE), permitting loading of DNA polymerase. After initiation quickly degrades to an ADP-DnaA complex that is not apt for DNA replication. Binds acidic phospholipids. This Streptomyces coelicolor (strain ATCC BAA-471 / A3(2) / M145) protein is Chromosomal replication initiator protein DnaA.